Reading from the N-terminus, the 206-residue chain is Pro-glucagon (206 aa).

The N-terminal stretch at 1-22 (MKMKSIYFIAGLLLMIVQGSWQ) is a signal peptide. The tract at residues 27–57 (DTEEKSRSFKASQSEPLDESRQLNEVKRHSQ) is disordered. The span at 44–54 (DESRQLNEVKR) shows a compositional bias: basic and acidic residues. Positions 86–109 (NGQQGQEDKENDKFPDQLSSNAIS) are excised as a propeptide. Arginine 147 carries the arginine amide modification. Propeptides lie at residues 151–163 (DFPEKALMAEEMG) and 199–206 (RDLLGEYQ).

The protein belongs to the glucagon family. Post-translationally, proglucagon is post-translationally processed in a tissue-specific manner in pancreatic A cells and intestinal L cells. In pancreatic A cells, the major bioactive hormone is glucagon cleaved by PCSK2/PC2. In the intestinal L cells PCSK1/PC1 liberates GLP-1 and GLP-2. GLP-1 is further N-terminally truncated by post-translational processing in the intestinal L cells resulting in GLP-1(7-37) GLP-1-(7-36)amide.

It localises to the secreted. In terms of biological role, plays a key role in glucose metabolism and homeostasis. Regulates blood glucose by increasing gluconeogenesis and decreasing glycolysis. Its function is as follows. Potent stimulator of glucose-dependent insulin release. Plays important roles on gastric motility and the suppression of plasma glucagon levels. May be involved in the suppression of satiety and stimulation of glucose disposal in peripheral tissues, independent of the actions of insulin. Has growth-promoting activities on intestinal epithelium. May also regulate the hypothalamic pituitary axis (HPA) via effects on LH, TSH, CRH, oxytocin, and vasopressin secretion. Increases islet mass through stimulation of islet neogenesis and pancreatic beta cell proliferation. Stimulates intestinal growth and up-regulates villus height in the small intestine, concomitant with increased crypt cell proliferation and decreased enterocyte apoptosis. The gastrointestinal tract, from the stomach to the colon is the principal target for GLP-2 action. Plays a key role in nutrient homeostasis, enhancing nutrient assimilation through enhanced gastrointestinal function, as well as increasing nutrient disposal. Stimulates intestinal glucose transport and decreases mucosal permeability. This Gallus gallus (Chicken) protein is Pro-glucagon (GCG).